A 225-amino-acid chain; its full sequence is NAD(P)H-quinone oxidoreductase subunit K, chloroplastic (225 aa).

Positions 43, 44, 108, and 139 each coordinate [4Fe-4S] cluster.

It belongs to the complex I 20 kDa subunit family. In terms of assembly, NDH is composed of at least 16 different subunits, 5 of which are encoded in the nucleus. The cofactor is [4Fe-4S] cluster.

The protein resides in the plastid. It is found in the chloroplast thylakoid membrane. It carries out the reaction a plastoquinone + NADH + (n+1) H(+)(in) = a plastoquinol + NAD(+) + n H(+)(out). The enzyme catalyses a plastoquinone + NADPH + (n+1) H(+)(in) = a plastoquinol + NADP(+) + n H(+)(out). Its function is as follows. NDH shuttles electrons from NAD(P)H:plastoquinone, via FMN and iron-sulfur (Fe-S) centers, to quinones in the photosynthetic chain and possibly in a chloroplast respiratory chain. The immediate electron acceptor for the enzyme in this species is believed to be plastoquinone. Couples the redox reaction to proton translocation, and thus conserves the redox energy in a proton gradient. The chain is NAD(P)H-quinone oxidoreductase subunit K, chloroplastic from Guizotia abyssinica (Niger).